The sequence spans 95 residues: Small ribosomal subunit protein bS16 (95 aa).

It belongs to the bacterial ribosomal protein bS16 family.

The sequence is that of Small ribosomal subunit protein bS16 from Thermotoga neapolitana (strain ATCC 49049 / DSM 4359 / NBRC 107923 / NS-E).